Here is a 320-residue protein sequence, read N- to C-terminus: ATP-dependent 6-phosphofructokinase (320 aa).

Position 12 (Gly12) interacts with ATP. ADP is bound by residues Arg22–Arg26 and Arg55–Asp60. Residues Arg73 to Phe74 and Gly103 to Ser106 each bind ATP. Residue Asp104 coordinates Mg(2+). Thr126–Asp128 contributes to the substrate binding site. Asp128 acts as the Proton acceptor in catalysis. Arg155 lines the ADP pocket. Substrate contacts are provided by residues Arg163 and Met170–Arg172. Residues Gly186–Glu188, Lys212, and Lys214–His216 contribute to the ADP site. Substrate is bound by residues Glu223, Arg244, and His250–Arg253.

The protein belongs to the phosphofructokinase type A (PFKA) family. ATP-dependent PFK group I subfamily. Prokaryotic clade 'B1' sub-subfamily. Homotetramer. It depends on Mg(2+) as a cofactor.

Its subcellular location is the cytoplasm. The catalysed reaction is beta-D-fructose 6-phosphate + ATP = beta-D-fructose 1,6-bisphosphate + ADP + H(+). It participates in carbohydrate degradation; glycolysis; D-glyceraldehyde 3-phosphate and glycerone phosphate from D-glucose: step 3/4. Its activity is regulated as follows. Allosterically activated by ADP and other diphosphonucleosides, and allosterically inhibited by phosphoenolpyruvate. Its function is as follows. Catalyzes the phosphorylation of D-fructose 6-phosphate to fructose 1,6-bisphosphate by ATP, the first committing step of glycolysis. The polypeptide is ATP-dependent 6-phosphofructokinase (Enterobacter cloacae).